The chain runs to 346 residues: Protein RecA (346 aa).

Residue 67–74 (GPESSGKT) coordinates ATP.

This sequence belongs to the RecA family.

Its subcellular location is the cytoplasm. Can catalyze the hydrolysis of ATP in the presence of single-stranded DNA, the ATP-dependent uptake of single-stranded DNA by duplex DNA, and the ATP-dependent hybridization of homologous single-stranded DNAs. It interacts with LexA causing its activation and leading to its autocatalytic cleavage. The protein is Protein RecA of Saccharopolyspora erythraea (strain ATCC 11635 / DSM 40517 / JCM 4748 / NBRC 13426 / NCIMB 8594 / NRRL 2338).